Consider the following 576-residue polypeptide: Proline--tRNA ligase (576 aa).

The protein belongs to the class-II aminoacyl-tRNA synthetase family. ProS type 1 subfamily. Homodimer.

The protein resides in the cytoplasm. It carries out the reaction tRNA(Pro) + L-proline + ATP = L-prolyl-tRNA(Pro) + AMP + diphosphate. Functionally, catalyzes the attachment of proline to tRNA(Pro) in a two-step reaction: proline is first activated by ATP to form Pro-AMP and then transferred to the acceptor end of tRNA(Pro). As ProRS can inadvertently accommodate and process non-cognate amino acids such as alanine and cysteine, to avoid such errors it has two additional distinct editing activities against alanine. One activity is designated as 'pretransfer' editing and involves the tRNA(Pro)-independent hydrolysis of activated Ala-AMP. The other activity is designated 'posttransfer' editing and involves deacylation of mischarged Ala-tRNA(Pro). The misacylated Cys-tRNA(Pro) is not edited by ProRS. The protein is Proline--tRNA ligase of Leptospira interrogans serogroup Icterohaemorrhagiae serovar copenhageni (strain Fiocruz L1-130).